We begin with the raw amino-acid sequence, 283 residues long: Shikimate dehydrogenase (NADP(+)) (283 aa).

Shikimate contacts are provided by residues 16-18 (SLS) and T63. The active-site Proton acceptor is the K67. Residue D79 participates in NADP(+) binding. Residues N88 and D103 each coordinate shikimate. NADP(+)-binding positions include 128–132 (GAGGA) and G243.

It belongs to the shikimate dehydrogenase family. In terms of assembly, homodimer.

It carries out the reaction shikimate + NADP(+) = 3-dehydroshikimate + NADPH + H(+). It participates in metabolic intermediate biosynthesis; chorismate biosynthesis; chorismate from D-erythrose 4-phosphate and phosphoenolpyruvate: step 4/7. Involved in the biosynthesis of the chorismate, which leads to the biosynthesis of aromatic amino acids. Catalyzes the reversible NADPH linked reduction of 3-dehydroshikimate (DHSA) to yield shikimate (SA). The sequence is that of Shikimate dehydrogenase (NADP(+)) from Xanthomonas euvesicatoria pv. vesicatoria (strain 85-10) (Xanthomonas campestris pv. vesicatoria).